Consider the following 306-residue polypeptide: MTNEFLHFDRISRERWQQLHRKTTPPLTEEELNSIKSFNDEISLQDVMDIYLPLTNLIQIYKRAKEDLAFSKGIFLQKTLKKQPFIIGVSGSVAVGKSTTSRLLQILLSRTFENAKVELVTTDGFLYPNSVLQEHDLLNRKGFPESYNMELLLNFLDHLKNGQNYQVPVYSHEIYDIVPDQTQTIQVADFVIVEGINVFQNPQNERLYITDFFDFSIYVDAEVENIEKWYLDRFGKLLDLARRDSKNYYHRFTKEPVEDIMKMARNIWKSINLVNLKDYIEPTRNRAELILHKAHNHEIDEIYLKK.

ATP is bound at residue 91-98 (GSVAVGKS).

Belongs to the prokaryotic pantothenate kinase family.

The protein resides in the cytoplasm. It catalyses the reaction (R)-pantothenate + ATP = (R)-4'-phosphopantothenate + ADP + H(+). It participates in cofactor biosynthesis; coenzyme A biosynthesis; CoA from (R)-pantothenate: step 1/5. The sequence is that of Pantothenate kinase from Streptococcus gordonii (strain Challis / ATCC 35105 / BCRC 15272 / CH1 / DL1 / V288).